The primary structure comprises 78 residues: Probable Fe(2+)-trafficking protein (78 aa).

The protein belongs to the Fe(2+)-trafficking protein family. As to quaternary structure, monomer.

Functionally, could be a mediator in iron transactions between iron acquisition and iron-requiring processes, such as synthesis and/or repair of Fe-S clusters in biosynthetic enzymes. This is Probable Fe(2+)-trafficking protein from Wigglesworthia glossinidia brevipalpis.